Reading from the N-terminus, the 218-residue chain is Adenylate kinase (218 aa).

10-15 (GAGKGT) is an ATP binding site. The tract at residues 30 to 59 (STGDMLRAAVKAGTPLGIEAKKVMDAGGLV) is NMP. Residues threonine 31, arginine 36, 57–59 (GLV), 85–88 (GFPR), and glutamine 92 each bind AMP. The segment at 122–159 (GRRSHAASGRTYHVKFNPPKVAGVDDVTGEPLIQRDDD) is LID. Residues arginine 123 and 132–133 (TY) contribute to the ATP site. Residues arginine 156 and arginine 167 each coordinate AMP. Residue glycine 203 coordinates ATP.

Belongs to the adenylate kinase family. As to quaternary structure, monomer.

Its subcellular location is the cytoplasm. It catalyses the reaction AMP + ATP = 2 ADP. The protein operates within purine metabolism; AMP biosynthesis via salvage pathway; AMP from ADP: step 1/1. Catalyzes the reversible transfer of the terminal phosphate group between ATP and AMP. Plays an important role in cellular energy homeostasis and in adenine nucleotide metabolism. In Albidiferax ferrireducens (strain ATCC BAA-621 / DSM 15236 / T118) (Rhodoferax ferrireducens), this protein is Adenylate kinase.